We begin with the raw amino-acid sequence, 108 residues long: Small ribosomal subunit protein bS16 (108 aa).

The tract at residues 82 to 108 is disordered; it reads ESKFSKNTQTENKKPVSKKTTKKSKDN. Residues 96-108 show a composition bias toward basic residues; it reads PVSKKTTKKSKDN.

It belongs to the bacterial ribosomal protein bS16 family.

In Mycoplasma capricolum subsp. capricolum (strain California kid / ATCC 27343 / NCTC 10154), this protein is Small ribosomal subunit protein bS16.